We begin with the raw amino-acid sequence, 89 residues long: Small ribosomal subunit protein uS15 (89 aa).

Residues 1–24 form a disordered region; that stretch reads MSLNAETKAGIVEKYRRDPSDTGS. Positions 11-20 are enriched in basic and acidic residues; sequence IVEKYRRDPS.

This sequence belongs to the universal ribosomal protein uS15 family. As to quaternary structure, part of the 30S ribosomal subunit. Forms a bridge to the 50S subunit in the 70S ribosome, contacting the 23S rRNA.

In terms of biological role, one of the primary rRNA binding proteins, it binds directly to 16S rRNA where it helps nucleate assembly of the platform of the 30S subunit by binding and bridging several RNA helices of the 16S rRNA. Functionally, forms an intersubunit bridge (bridge B4) with the 23S rRNA of the 50S subunit in the ribosome. The polypeptide is Small ribosomal subunit protein uS15 (Thioalkalivibrio sulfidiphilus (strain HL-EbGR7)).